The sequence spans 87 residues: Small ribosomal subunit protein uS15c (87 aa).

This sequence belongs to the universal ribosomal protein uS15 family. Part of the 30S ribosomal subunit.

The protein localises to the plastid. It is found in the chloroplast. The sequence is that of Small ribosomal subunit protein uS15c (rps15) from Nicotiana tabacum (Common tobacco).